Here is a 233-residue protein sequence, read N- to C-terminus: Putative N-acetylmannosamine-6-phosphate 2-epimerase (233 aa).

Belongs to the NanE family.

It catalyses the reaction an N-acyl-D-glucosamine 6-phosphate = an N-acyl-D-mannosamine 6-phosphate. It functions in the pathway amino-sugar metabolism; N-acetylneuraminate degradation; D-fructose 6-phosphate from N-acetylneuraminate: step 3/5. Functionally, converts N-acetylmannosamine-6-phosphate (ManNAc-6-P) to N-acetylglucosamine-6-phosphate (GlcNAc-6-P). The polypeptide is Putative N-acetylmannosamine-6-phosphate 2-epimerase (Yersinia pseudotuberculosis serotype O:3 (strain YPIII)).